The following is a 222-amino-acid chain: Uridine diphosphate glucose pyrophosphatase NUDT14 (222 aa).

In terms of domain architecture, Nudix hydrolase spans 38-206; it reads KTHDSVTVLL…DIPKTLGVIF (169 aa). Positions 111–129 match the Nudix box motif; it reads PGLSLEEVACKEAWEECGY.

It belongs to the Nudix hydrolase family. Homodimer. The cofactor is Mg(2+).

It localises to the cytoplasm. The catalysed reaction is UDP-sugar + H2O = UMP + alpha-D-aldose 1-phosphate.. Hydrolyzes UDP-glucose to glucose 1-phosphate and UMP and ADP-ribose to ribose 5-phosphate and AMP. The physiological substrate is probably UDP-glucose. Poor activity on other substrates such as ADP-glucose, CDP-glucose, GDP-glucose and GDP-mannose. The protein is Uridine diphosphate glucose pyrophosphatase NUDT14 (NUDT14) of Homo sapiens (Human).